The chain runs to 183 residues: Ribosome-recycling factor (183 aa).

It belongs to the RRF family.

The protein resides in the cytoplasm. Its function is as follows. Responsible for the release of ribosomes from messenger RNA at the termination of protein biosynthesis. May increase the efficiency of translation by recycling ribosomes from one round of translation to another. The chain is Ribosome-recycling factor from Deinococcus radiodurans (strain ATCC 13939 / DSM 20539 / JCM 16871 / CCUG 27074 / LMG 4051 / NBRC 15346 / NCIMB 9279 / VKM B-1422 / R1).